The sequence spans 423 residues: Glutamyl-tRNA reductase (423 aa).

Residues 49–52, S106, 111–113, and Q117 contribute to the substrate site; these read TCNR and EPQ. C50 (nucleophile) is an active-site residue. 186–191 lines the NADP(+) pocket; that stretch reads GAGDTS.

This sequence belongs to the glutamyl-tRNA reductase family. Homodimer.

It catalyses the reaction (S)-4-amino-5-oxopentanoate + tRNA(Glu) + NADP(+) = L-glutamyl-tRNA(Glu) + NADPH + H(+). It participates in porphyrin-containing compound metabolism; protoporphyrin-IX biosynthesis; 5-aminolevulinate from L-glutamyl-tRNA(Glu): step 1/2. Its function is as follows. Catalyzes the NADPH-dependent reduction of glutamyl-tRNA(Glu) to glutamate 1-semialdehyde (GSA). This chain is Glutamyl-tRNA reductase, found in Idiomarina loihiensis (strain ATCC BAA-735 / DSM 15497 / L2-TR).